We begin with the raw amino-acid sequence, 209 residues long: MTKGILGRKVGMTQIFTKDGVLVPVTVIEATPNVVMQVKTVENDGYEAVQLGYQDKREVLSNKPEKGHADKAKTSPKRFIRELRGVELSDYEVGSEVTVETFKEGDVVNVTGTSRGHGYQGNIKRHHQSRGPETHGSRYHRIPGSMGSIINRVPKGKKLPGHMGVKTVTIENLVVEKVVADKNVLMIKGNVPGAKNSLIVVKSSAKASK.

The disordered stretch occupies residues 113-155; that stretch reads TSRGHGYQGNIKRHHQSRGPETHGSRYHRIPGSMGSIINRVPK.

Belongs to the universal ribosomal protein uL3 family. Part of the 50S ribosomal subunit. Forms a cluster with proteins L14 and L19.

In terms of biological role, one of the primary rRNA binding proteins, it binds directly near the 3'-end of the 23S rRNA, where it nucleates assembly of the 50S subunit. The polypeptide is Large ribosomal subunit protein uL3 (Lactobacillus delbrueckii subsp. bulgaricus (strain ATCC 11842 / DSM 20081 / BCRC 10696 / JCM 1002 / NBRC 13953 / NCIMB 11778 / NCTC 12712 / WDCM 00102 / Lb 14)).